The following is a 103-amino-acid chain: uncharacterized protein (103 aa).

The 54-residue stretch at 10 to 63 (FPECDHLKQIYDKCFTEFFQKFITPNYRHQYAVNPCERLHDVYKRCVEERLATQ) folds into the CHCH domain. 2 consecutive short sequence motifs (cx9C motif) follow at residues 13–23 (CDHLKQIYDKC) and 45–55 (CERLHDVYKRC). Intrachain disulfides connect Cys13-Cys55 and Cys23-Cys45. The segment covering 80–90 (TDDDKLKDRQN) has biased composition (basic and acidic residues). A disordered region spans residues 80 to 103 (TDDDKLKDRQNNQKTNSENKCSSS). Residues 91-103 (NQKTNSENKCSSS) are compositionally biased toward polar residues.

It belongs to the TRIAP1/MDM35 family.

This is an uncharacterized protein from Caenorhabditis elegans.